Consider the following 157-residue polypeptide: 2-C-methyl-D-erythritol 2,4-cyclodiphosphate synthase (157 aa).

A divalent metal cation contacts are provided by Asp-8 and His-10. 4-CDP-2-C-methyl-D-erythritol 2-phosphate-binding positions include 8–10 (DVH) and 34–35 (HS). His-42 is an a divalent metal cation binding site. 4-CDP-2-C-methyl-D-erythritol 2-phosphate is bound by residues 56-58 (DIG), 61-65 (FPDTD), 100-106 (AQRPKMA), 132-135 (TTEE), and Phe-139.

The protein belongs to the IspF family. Homotrimer. The cofactor is a divalent metal cation.

The catalysed reaction is 4-CDP-2-C-methyl-D-erythritol 2-phosphate = 2-C-methyl-D-erythritol 2,4-cyclic diphosphate + CMP. Its pathway is isoprenoid biosynthesis; isopentenyl diphosphate biosynthesis via DXP pathway; isopentenyl diphosphate from 1-deoxy-D-xylulose 5-phosphate: step 4/6. Functionally, involved in the biosynthesis of isopentenyl diphosphate (IPP) and dimethylallyl diphosphate (DMAPP), two major building blocks of isoprenoid compounds. Catalyzes the conversion of 4-diphosphocytidyl-2-C-methyl-D-erythritol 2-phosphate (CDP-ME2P) to 2-C-methyl-D-erythritol 2,4-cyclodiphosphate (ME-CPP) with a corresponding release of cytidine 5-monophosphate (CMP). This chain is 2-C-methyl-D-erythritol 2,4-cyclodiphosphate synthase, found in Trichlorobacter lovleyi (strain ATCC BAA-1151 / DSM 17278 / SZ) (Geobacter lovleyi).